The primary structure comprises 396 residues: Putative cytochrome P450 YjiB (396 aa).

Residue Cys349 participates in heme binding.

The protein belongs to the cytochrome P450 family. Heme is required as a cofactor.

In Bacillus subtilis (strain 168), this protein is Putative cytochrome P450 YjiB (yjiB).